The sequence spans 677 residues: MYKNLHPKYFRLAAEYDPSGDQPKAIGELSDRIESGETDIVLLGATGTGKSATIAWLIEKLARPTLIIAHNKTLAAQLANEFRKFFPDNAVEYFVSYYDYYQPEAYVPKTDTFIEKDASVNSEVERLRHRATTSLLTRRDVIVVATVSCIYGLGAPSEYLKAGFRLEVGQKISQRVLLERFTQLQYNRNDVGFERGNFRVRGDTIEIIPVYEEYTVRIEMWGDEIERVLCLHPVTGNLLSEQRGVLIFPASHYVTSSENLKRAIVDIRKELQQRLRYFKRNNSLLEAQRLETRTEYDIELMEQLGFCSGIENYSRHIDGRAPGEPPFCLLDYFDDDFLTVIDESHVTVPQIGSMHAGDFSRKKALVENGFRLPSAIDNRPLCFDEFRQRVGQVIYLSATPGKYELSKSDGVVEQIIRPTGLVDPKITVKPIKGQIDDLLEEIRKRKLLSERVLVTTLTKRMAEELTDFLSEAGVNVSYLHSDIDTLHRVELLTSLRMGRIDVLVGINLLREGLDLPEVSLVAILDADKEGFLRSTTSFIQTIGRAARHVSGEVHMYADNMTESMQKSIDETNRRRRIQQDYNRKMGVTPVPIKKTVSDITEVLSRPSRKIDCTILDSLPDPKIDGKQIKSHIKSLEAKMYMAAESLMFEEAAELRDEIQSLKEKFLKPRGSGGKIRQ.

A Helicase ATP-binding domain is found at 31-417 (DRIESGETDI…SDGVVEQIIR (387 aa)). 44 to 51 (GATGTGKS) serves as a coordination point for ATP. The short motif at 97–120 (YYDYYQPEAYVPKTDTFIEKDASV) is the Beta-hairpin element. The Helicase C-terminal domain occupies 434-596 (QIDDLLEEIR…VTPVPIKKTV (163 aa)). Residues 629 to 664 (KSHIKSLEAKMYMAAESLMFEEAAELRDEIQSLKEK) enclose the UVR domain.

The protein belongs to the UvrB family. In terms of assembly, forms a heterotetramer with UvrA during the search for lesions. Interacts with UvrC in an incision complex.

The protein localises to the cytoplasm. The UvrABC repair system catalyzes the recognition and processing of DNA lesions. A damage recognition complex composed of 2 UvrA and 2 UvrB subunits scans DNA for abnormalities. Upon binding of the UvrA(2)B(2) complex to a putative damaged site, the DNA wraps around one UvrB monomer. DNA wrap is dependent on ATP binding by UvrB and probably causes local melting of the DNA helix, facilitating insertion of UvrB beta-hairpin between the DNA strands. Then UvrB probes one DNA strand for the presence of a lesion. If a lesion is found the UvrA subunits dissociate and the UvrB-DNA preincision complex is formed. This complex is subsequently bound by UvrC and the second UvrB is released. If no lesion is found, the DNA wraps around the other UvrB subunit that will check the other stand for damage. In Tropheryma whipplei (strain TW08/27) (Whipple's bacillus), this protein is UvrABC system protein B.